Reading from the N-terminus, the 171-residue chain is Ribosome maturation factor RimM (171 aa).

Positions 97 to 170 (EGEYYYHEVI…QVTIHVMEGL (74 aa)) constitute a PRC barrel domain.

This sequence belongs to the RimM family. Binds ribosomal protein uS19.

The protein resides in the cytoplasm. In terms of biological role, an accessory protein needed during the final step in the assembly of 30S ribosomal subunit, possibly for assembly of the head region. Essential for efficient processing of 16S rRNA. May be needed both before and after RbfA during the maturation of 16S rRNA. It has affinity for free ribosomal 30S subunits but not for 70S ribosomes. The protein is Ribosome maturation factor RimM of Bacillus cytotoxicus (strain DSM 22905 / CIP 110041 / 391-98 / NVH 391-98).